The following is a 639-amino-acid chain: Chaperone protein DnaK (639 aa).

Thr-198 is subject to Phosphothreonine; by autocatalysis. The interval 605–624 (SQAQGGAETNAGKQANAAAD) is disordered.

It belongs to the heat shock protein 70 family.

Functionally, acts as a chaperone. The protein is Chaperone protein DnaK of Shewanella putrefaciens (strain CN-32 / ATCC BAA-453).